The following is a 230-amino-acid chain: Ureidoacrylate amidohydrolase RutB (230 aa).

Asp-24 functions as the Proton acceptor in the catalytic mechanism. Lys-133 is an active-site residue. The active-site Nucleophile is Cys-166.

This sequence belongs to the isochorismatase family. RutB subfamily.

It catalyses the reaction (Z)-3-ureidoacrylate + H2O + H(+) = (Z)-3-aminoacrylate + NH4(+) + CO2. It carries out the reaction (Z)-3-ureidoacrylate + H2O = (Z)-3-aminoacrylate + carbamate + H(+). The enzyme catalyses (Z)-2-methylureidoacrylate + H2O + H(+) = (Z)-2-methylaminoacrylate + NH4(+) + CO2. In terms of biological role, hydrolyzes ureidoacrylate to form aminoacrylate and carbamate. The carbamate hydrolyzes spontaneously, thereby releasing one of the nitrogen atoms of the pyrimidine ring as ammonia and one of its carbon atoms as CO2. In Escherichia coli O157:H7, this protein is Ureidoacrylate amidohydrolase RutB.